The following is a 498-amino-acid chain: ATP synthase subunit beta, chloroplastic (498 aa).

Positions 1–14 are enriched in polar residues; it reads MRTNPTTSRPGVST. Positions 1–20 are disordered; the sequence is MRTNPTTSRPGVSTSEEKST. 172 to 179 is a binding site for ATP; the sequence is GGAGVGKT.

This sequence belongs to the ATPase alpha/beta chains family. F-type ATPases have 2 components, CF(1) - the catalytic core - and CF(0) - the membrane proton channel. CF(1) has five subunits: alpha(3), beta(3), gamma(1), delta(1), epsilon(1). CF(0) has four main subunits: a(1), b(1), b'(1) and c(9-12).

It localises to the plastid. Its subcellular location is the chloroplast thylakoid membrane. The enzyme catalyses ATP + H2O + 4 H(+)(in) = ADP + phosphate + 5 H(+)(out). In terms of biological role, produces ATP from ADP in the presence of a proton gradient across the membrane. The catalytic sites are hosted primarily by the beta subunits. In Hordeum vulgare (Barley), this protein is ATP synthase subunit beta, chloroplastic.